Here is a 544-residue protein sequence, read N- to C-terminus: METWRCVRRGYGRCVAGRGRYSMFPYPLKSLGRDWTTPWEDLQKYCWRRHISSCLRWPGHYSRAPYPYFSSRHFSLNCRPPFLFESGTQFQYYNWRSDHLSNASLIHLSRHVMTSDRDEPLSKRRKHQGTIKRNWEYLCSHNKENTKDLEDRNVDSTCEDREDKFDFSVMSYNILSQDLLEDNSHLYRHCRRPVLHWSFRFPNILKEIKHFDADVLCLQEVQEDHYGTEIRPSLESLGYHCEYKMKTGRKPDGCAICFKHSRFSLLSVNPVEFCRRDIPLLDRDNIGLVLLLQPKIPRAASPSICIANTHLLYNPRRGDIKLTQLAMLLAEIANVTHRKDGSSCPIVMCGDFNSVPGSPLYSFIKEGKLNYEGLAIGKVSGQEQSSRGQRILSIPIWPPNLGISQNCVYEAQQVPKVEKTDSDVTQAQQEKAEVPVSADKVSSHLQHGFSLSSVYSHYVPDTGVPEVTTCHSRSAITVDYIFYTAKKENTAQGPGAEVALVGGLKLLARLSLLTEQDLWTVNGLPNEHNSSDHLPLLAKFRLEL.

The protein belongs to the CCR4/nocturin family.

In Mus musculus (Mouse), this protein is Protein angel homolog 2 (Angel2).